The sequence spans 101 residues: Apolipoprotein C-II (101 aa).

The N-terminal stretch at 1–22 (MGIRYLLVLVLVLLVLGCEVQG) is a signal peptide. The propeptide occupies 23–28 (AHMPQQ). The tract at residues 66–74 (TMDEKIREI) is lipid binding. A lipoprotein lipase cofactor region spans residues 78-101 (STAAVSTYAGIFTDQLLSMLKGDQ).

It belongs to the apolipoprotein C2 family. Post-translationally, proapolipoprotein C-II is synthesized as a sialic acid containing glycoprotein which is subsequently desialylated prior to its proteolytic processing. In terms of processing, proapolipoprotein C-II, the major form found in plasma undergoes proteolytic cleavage of its N-terminal hexapeptide to generate apolipoprotein C-II, which occurs as the minor form in plasma.

The protein localises to the secreted. Component of chylomicrons, very low-density lipoproteins (VLDL), low-density lipoproteins (LDL), and high-density lipoproteins (HDL) in plasma. Plays an important role in lipoprotein metabolism as an activator of lipoprotein lipase. Both proapolipoprotein C-II and apolipoprotein C-II can activate lipoprotein lipase. This is Apolipoprotein C-II (APOC2) from Neomonachus schauinslandi (Hawaiian monk seal).